The sequence spans 672 residues: F(420)H(2) dehydrogenase subunit L (672 aa).

Transmembrane regions (helical) follow at residues 8-28 (EFAFLIPLLPALAFAITFFFG), 37-57 (IVPILAIAASFVISFAITLGL), 79-99 (ILIDPLAAVMLSMVSFVSLLI), 136-156 (ILQLFVSWELVGLCSYLLIGF), 179-199 (VMFLTGIIVLTSDLLKVSGGF), 225-245 (ILGFEISHLTIITLLFFGGAV), 265-285 (TTVSALIHAATMVTAGVYLVA), 298-318 (LMVVAYFGGFTALFAGTMGIV), 337-357 (MMLGLGLGTAIGLEAVGISLF), 360-380 (INHAFFKALLFLCAGSVIHAV), 394-414 (VMPITAATMTIAALALAGFGI), 447-467 (YVFSILAALLTSIYIFRLIFM), 483-503 (PAIMTIPLSILAIFALAFGAL), 545-565 (LAVLWPPVIVALAGFAIAFVI), 601-621 (FSIGIVYGIIAFLTQVVDVII), and 652-672 (TALIAGVSLLIILVKLIMEVL).

The protein belongs to the complex I subunit 5 family. The FPO complex is composed of at least 13 different subunits. FpoA, FpoH, FpoJ, FpoK, FpoL, FpoM and FpoN proteins constitute the membrane sector of the complex.

It is found in the cell membrane. The enzyme catalyses methanophenazine + reduced coenzyme F420-(gamma-L-Glu)(n) = dihydromethanophenazine + oxidized coenzyme F420-(gamma-L-Glu)(n) + H(+). Functionally, component of the F(420)H(2) dehydrogenase (FPO complex) which is part of the energy-conserving F(420)H(2):heterodisulfide oxidoreductase system. The membrane-bound electron transfer system of the complex plays an important role in the metabolism of methylotrophic methanogens when the organisms grow on methanol or methylamines. Catalyzes the oxidation of methanophenazine to dihydromethanophenazine. It shuttles electrons from F(420)H(2), via FAD and iron-sulfur (Fe-S) centers, to methanophenazine (an electron carrier in the membrane). It couples the redox reaction to proton translocation (for every two electrons transferred, two hydrogen ions are translocated across the cytoplasmic membrane), and thus conserves the redox energy in a proton gradient. It also catalyzes the oxidation of F(420)H(2) with quinones such as 2,3-dimethyl-1,4-naphthoquinone, 2-methyl-1,4-naphthoquinone and tetramethyl-p-benzoquinone. This is F(420)H(2) dehydrogenase subunit L (fpoL) from Methanosarcina mazei (strain ATCC BAA-159 / DSM 3647 / Goe1 / Go1 / JCM 11833 / OCM 88) (Methanosarcina frisia).